The primary structure comprises 207 residues: MIOREX complex component 11 (207 aa).

Residues 1–46 (MTVMNLFFRPCQLQMGSGPLELMLKRPTQLTTFMNTRPGGSTQIRF) constitute a mitochondrion transit peptide. Topologically, residues 47 to 98 (ISGNLDPVKRREDRLRKIFSKSRLLTRLNKNPKFSHYFDRLSEAGTVPTLTS) are mitochondrial matrix. Residues 99–119 (FFILHEVTAILPLFLLWWLLY) form a helical membrane-spanning segment. The Mitochondrial intermembrane segment spans residues 120 to 177 (NLDLSDDFKLPNFLNGLMDSCHTAMEKFVGKRYQECLNKNKLILSGTVAYVTVKLLYP). Residues 178 to 198 (VRIFISIWGAPYFGKWLLLPF) traverse the membrane as a helical segment. The Mitochondrial matrix portion of the chain corresponds to 199-207 (QKLKHLIKK).

Belongs to the MRX11 family. As to quaternary structure, associates with the mitochondrial ribosome.

It localises to the mitochondrion. It is found in the mitochondrion inner membrane. Component of MIOREX complexes, large expressome-like assemblies of ribosomes with factors involved in all the steps of post-transcriptional gene expression. This is MIOREX complex component 11 from Saccharomyces cerevisiae (strain ATCC 204508 / S288c) (Baker's yeast).